Consider the following 206-residue polypeptide: Ribosomal RNA small subunit methyltransferase G (206 aa).

Residues G74, L79, 125–126 (VE), and R140 each bind S-adenosyl-L-methionine.

The protein belongs to the methyltransferase superfamily. RNA methyltransferase RsmG family.

Its subcellular location is the cytoplasm. The catalysed reaction is guanosine(527) in 16S rRNA + S-adenosyl-L-methionine = N(7)-methylguanosine(527) in 16S rRNA + S-adenosyl-L-homocysteine. Specifically methylates the N7 position of guanine in position 527 of 16S rRNA. This Shewanella oneidensis (strain ATCC 700550 / JCM 31522 / CIP 106686 / LMG 19005 / NCIMB 14063 / MR-1) protein is Ribosomal RNA small subunit methyltransferase G.